Here is a 238-residue protein sequence, read N- to C-terminus: NAD(P)H-hydrate epimerase (238 aa).

The YjeF N-terminal domain occupies 10–225 (AIKVDQILFN…ALQRQYELNL (216 aa)). 68–72 (NNGGD) serves as a coordination point for (6S)-NADPHX. K(+) contacts are provided by asparagine 69 and aspartate 133. Residues 137-143 (GFSFKPP) and aspartate 166 each bind (6S)-NADPHX. Serine 169 serves as a coordination point for K(+).

The protein belongs to the NnrE/AIBP family. The cofactor is K(+).

It catalyses the reaction (6R)-NADHX = (6S)-NADHX. It carries out the reaction (6R)-NADPHX = (6S)-NADPHX. Its function is as follows. Catalyzes the epimerization of the S- and R-forms of NAD(P)HX, a damaged form of NAD(P)H that is a result of enzymatic or heat-dependent hydration. This is a prerequisite for the S-specific NAD(P)H-hydrate dehydratase to allow the repair of both epimers of NAD(P)HX. The chain is NAD(P)H-hydrate epimerase from Drosophila willistoni (Fruit fly).